Here is a 47-residue protein sequence, read N- to C-terminus: Large ribosomal subunit protein bL33A (47 aa).

The protein belongs to the bacterial ribosomal protein bL33 family.

The chain is Large ribosomal subunit protein bL33A from Staphylococcus aureus (strain JH1).